Here is a 131-residue protein sequence, read N- to C-terminus: Superoxide dismutase [Ni] (131 aa).

Positions 1 to 14 are excised as a propeptide; that stretch reads MLSRLFAPKVTVSA. Residues His-15, Cys-16, and Cys-20 each contribute to the Ni(2+) site.

This sequence belongs to the nickel superoxide dismutase family. As to quaternary structure, homohexamer. The hexameric protein has a roughly the shape of a hollow sphere with an outer diameter of 60 angstroms and a large interior cavity. Ni(2+) serves as cofactor.

The protein resides in the cytoplasm. It carries out the reaction 2 superoxide + 2 H(+) = H2O2 + O2. The chain is Superoxide dismutase [Ni] (sodN) from Streptomyces coelicolor (strain ATCC BAA-471 / A3(2) / M145).